We begin with the raw amino-acid sequence, 274 residues long: tRNA (mnm(5)s(2)U34)-methyltransferase, chloroplastic (274 aa).

A chloroplast-targeting transit peptide spans 1–50 (MAAGFFQAEMSILSSTLARSYSLPIRKTLMTFDFRIAMQRNPCLRIRRSC). Asparagine 108, asparagine 110, aspartate 134, glutamine 136, and histidine 166 together coordinate S-adenosyl-L-methionine.

This sequence belongs to the methyltransferase superfamily. MnmM family.

The protein localises to the plastid. Its subcellular location is the chloroplast. The catalysed reaction is 5-aminomethyl-2-thiouridine(34) in tRNA + S-adenosyl-L-methionine = 5-methylaminomethyl-2-thiouridine(34) in tRNA + S-adenosyl-L-homocysteine + H(+). It participates in tRNA modification. Involved in the biosynthesis of 5-methylaminomethyl-2-thiouridine (mnm(5)s(2)U) at the wobble position (U34) in tRNA. Catalyzes the transfer of a methyl group from S-adenosyl-L-methionine to nm(5)s(2)U34 to form mnm(5)s(2)U34. The chain is tRNA (mnm(5)s(2)U34)-methyltransferase, chloroplastic from Arabidopsis thaliana (Mouse-ear cress).